Reading from the N-terminus, the 134-residue chain is D-ribose pyranase (134 aa).

Histidine 20 functions as the Proton donor in the catalytic mechanism. Substrate-binding positions include aspartate 28, histidine 101, and 123–125 (YCN).

This sequence belongs to the RbsD / FucU family. RbsD subfamily. As to quaternary structure, homodecamer.

It is found in the cytoplasm. It catalyses the reaction beta-D-ribopyranose = beta-D-ribofuranose. Its pathway is carbohydrate metabolism; D-ribose degradation; D-ribose 5-phosphate from beta-D-ribopyranose: step 1/2. Its function is as follows. Catalyzes the interconversion of beta-pyran and beta-furan forms of D-ribose. The sequence is that of D-ribose pyranase from Pseudomonas fluorescens (strain ATCC BAA-477 / NRRL B-23932 / Pf-5).